Here is a 445-residue protein sequence, read N- to C-terminus: ATP-dependent protease ATPase subunit HslU (445 aa).

ATP-binding positions include Val18, 60–65 (GVGKTE), Asp254, Glu319, and Arg391.

Belongs to the ClpX chaperone family. HslU subfamily. In terms of assembly, a double ring-shaped homohexamer of HslV is capped on each side by a ring-shaped HslU homohexamer. The assembly of the HslU/HslV complex is dependent on binding of ATP.

The protein resides in the cytoplasm. Functionally, ATPase subunit of a proteasome-like degradation complex; this subunit has chaperone activity. The binding of ATP and its subsequent hydrolysis by HslU are essential for unfolding of protein substrates subsequently hydrolyzed by HslV. HslU recognizes the N-terminal part of its protein substrates and unfolds these before they are guided to HslV for hydrolysis. The protein is ATP-dependent protease ATPase subunit HslU of Alcanivorax borkumensis (strain ATCC 700651 / DSM 11573 / NCIMB 13689 / SK2).